A 452-amino-acid chain; its full sequence is tRNA modification GTPase MnmE (452 aa).

Arg21, Glu78, and Lys118 together coordinate (6S)-5-formyl-5,6,7,8-tetrahydrofolate. Residues 214 to 375 (GMKVVIAGRP…LRDHLKQAMG (162 aa)) enclose the TrmE-type G domain. Residue Asn224 participates in K(+) binding. GTP-binding positions include 224–229 (NAGKSS), 243–249 (TDIAGTT), and 268–271 (DTAG). Ser228 serves as a coordination point for Mg(2+). K(+)-binding residues include Thr243, Ile245, and Thr248. Mg(2+) is bound at residue Thr249. Residue Lys452 participates in (6S)-5-formyl-5,6,7,8-tetrahydrofolate binding.

The protein belongs to the TRAFAC class TrmE-Era-EngA-EngB-Septin-like GTPase superfamily. TrmE GTPase family. As to quaternary structure, homodimer. Heterotetramer of two MnmE and two MnmG subunits. Requires K(+) as cofactor.

Its subcellular location is the cytoplasm. Functionally, exhibits a very high intrinsic GTPase hydrolysis rate. Involved in the addition of a carboxymethylaminomethyl (cmnm) group at the wobble position (U34) of certain tRNAs, forming tRNA-cmnm(5)s(2)U34. This is tRNA modification GTPase MnmE from Haemophilus influenzae (strain 86-028NP).